A 269-amino-acid chain; its full sequence is Autophagy-related protein 5 (269 aa).

Lysine 102 participates in a covalent cross-link: Glycyl lysine isopeptide (Lys-Gly) (interchain with G-Cter in ATG12).

This sequence belongs to the ATG5 family. Conjugated with ATG12. The ATG5-ATG12 conjugate forms a complex with several units of ATG16. The ATG12-ATG5 conjugate also associates with ATG3. In terms of processing, conjugated to ATG12; which is essential for autophagy. Conjugation with ATG12 involves ATG7 as an E1-like activating enzyme and ATG10 as an E2-like conjugating enzyme.

The protein resides in the preautophagosomal structure membrane. Involved in cytoplasm to vacuole transport (Cvt) and autophagic vesicle formation. Autophagy is essential for maintenance of amino acid levels and protein synthesis under nitrogen starvation. Required for selective autophagic degradation of the nucleus (nucleophagy). Also required for mitophagy, which eliminates defective or superfluous mitochondria in order to fulfill cellular energy requirements and prevent excess ROS production. Conjugation with ATG12, through a ubiquitin-like conjugating system involving ATG7 as an E1-like activating enzyme and ATG10 as an E2-like conjugating enzyme, is essential for its function. The ATG12-ATG5 conjugate acts as an E3-like enzyme which is required for lipidation of ATG8 and ATG8 association to the vesicle membranes. ATG12-ATG5 rearranges the ATG3 catalytic center and enhances its E2 activity. Required for proper vegetative growth, asexual/sexual reproduction, but, unlike several plant and animal pathogenic fungi, where ATG5 is required for infection, in B.bassiana it is dispensable for pathogenesis. This Beauveria bassiana (strain ARSEF 2860) (White muscardine disease fungus) protein is Autophagy-related protein 5.